Consider the following 500-residue polypeptide: Cytochrome P450 71B9 (500 aa).

Residues 1–21 (MATIWFLSLLFLCCILLAAFK) form a helical membrane-spanning segment. A heme-binding site is contributed by C440.

This sequence belongs to the cytochrome P450 family. It depends on heme as a cofactor.

It is found in the membrane. In Arabidopsis thaliana (Mouse-ear cress), this protein is Cytochrome P450 71B9 (CYP71B9).